The following is a 399-amino-acid chain: 4-hydroxyphenylpyruvate dioxygenase (399 aa).

2 consecutive VOC domains span residues 23–166 (GYDH…LIER) and 197–355 (RIDH…LFTK). Residues His200, His283, and Glu366 each contribute to the Fe cation site.

Belongs to the 4HPPD family. Fe cation is required as a cofactor.

The enzyme catalyses 3-(4-hydroxyphenyl)pyruvate + O2 = homogentisate + CO2. It participates in amino-acid degradation; L-phenylalanine degradation; acetoacetate and fumarate from L-phenylalanine: step 3/6. The protein is 4-hydroxyphenylpyruvate dioxygenase (TCRP) of Coccidioides posadasii (strain C735) (Valley fever fungus).